A 507-amino-acid chain; its full sequence is Inositol-3-phosphate synthase (507 aa).

NAD(+)-binding residues include Gly70, Gly71, Asn72, Asn73, Asp143, Ile180, Gln190, Arg193, Thr230, Ala231, Asn232, Thr233, Gly281, Ser282, Asp306, Ser309, Asn340, Asn341, Asp342, Lys355, Ala391, Asp419, and Ser420.

Belongs to the myo-inositol 1-phosphate synthase family. Requires NAD(+) as cofactor.

The protein resides in the cytoplasm. Its subcellular location is the cytosol. It localises to the nucleus. It carries out the reaction D-glucose 6-phosphate = 1D-myo-inositol 3-phosphate. Its pathway is polyol metabolism; myo-inositol biosynthesis; myo-inositol from D-glucose 6-phosphate: step 1/2. Functionally, key enzyme in myo-inositol biosynthesis pathway that catalyzes the conversion of glucose 6-phosphate to 1-myo-inositol 1-phosphate in a NAD-dependent manner. The polypeptide is Inositol-3-phosphate synthase (Citrus paradisi (Grapefruit)).